The following is a 185-amino-acid chain: Ribosome-recycling factor (185 aa).

The protein belongs to the RRF family.

It localises to the cytoplasm. Its function is as follows. Responsible for the release of ribosomes from messenger RNA at the termination of protein biosynthesis. May increase the efficiency of translation by recycling ribosomes from one round of translation to another. The sequence is that of Ribosome-recycling factor from Campylobacter lari (strain RM2100 / D67 / ATCC BAA-1060).